Consider the following 239-residue polypeptide: Transmembrane ascorbate ferrireductase 1 (239 aa).

Topologically, residues M1 to A7 are cytoplasmic. Residues M8–W28 traverse the membrane as a helical segment. Positions V13–S216 constitute a Cytochrome b561 domain. The Lumenal portion of the chain corresponds to S29 to L45. The helical transmembrane segment at I46–I66 threads the bilayer. H50 lines the heme b pocket. At I67–L81 the chain is on the cytoplasmic side. Residues I82 to F102 form a helical membrane-spanning segment. Heme b-binding residues include H83 and H117. The Lumenal portion of the chain corresponds to K103 to W119. Residues I120–F140 form a helical membrane-spanning segment. Residues F141–W155 are Cytoplasmic-facing. H156 provides a ligand contact to heme b. Residues H156–L176 form a helical membrane-spanning segment. The Lumenal portion of the chain corresponds to E177 to E193. A helical transmembrane segment spans residues A194–T214. Residues A215 to I239 are Cytoplasmic-facing. A disordered region spans residues A217–I239. Residues P224–I239 show a composition bias toward low complexity.

Homodimer. Heme b is required as a cofactor. In terms of tissue distribution, expressed in roots, seedlings and leaves. Lower expression in flowers. Expressed in the L1 layer of the shoot apex, in the epidermis of leaf primordia and young leaves and in vascular bundles. In the differentiation zone of the root, detected in the pericycle and in the epidermis, but not in the cortex. Strongly expressed in the lateral part of the root cap and in the epidermis of the root tip, but not in the meristematic tissue. Not expressed in lateral roots. In mature embryos, expressed in the epidermis, cotyledon tips and root tips.

Its subcellular location is the vacuole membrane. It catalyses the reaction Fe(3+)(out) + L-ascorbate(in) = monodehydro-L-ascorbate radical(in) + Fe(2+)(out) + H(+). Its function is as follows. Two-heme-containing cytochrome. Catalyzes ascorbate-dependent trans-membrane ferric-chelate reduction. Able to use dihydrolipoic acid (DHLA) as an alternative substrate to ascorbate. This is Transmembrane ascorbate ferrireductase 1 (CYB561A) from Arabidopsis thaliana (Mouse-ear cress).